The sequence spans 140 residues: Gas vesicle protein O (140 aa).

Positions 1–14 (MSDQGNEHANHDGI) are enriched in basic and acidic residues. The tract at residues 1 to 61 (MSDQGNEHAN…DSTIGLSDAQ (61 aa)) is disordered. Over residues 39 to 56 (QTASDEAVSNQSPDSTIG) the composition is skewed to polar residues.

The protein belongs to the gas vesicle GvpO family. In terms of assembly, forms homodimers, forms a GvpN-GvpO heterodimer, interacts with GvpC, GvpF, GvpI and GvpL, might interact with GvpA.

It is found in the gas vesicle. The protein localises to the cytoplasm. A minor component of the gas vesicle (GV), may play a role in transcription and/or RNA stability and/or in GV assembly. Gas vesicles are small, hollow, gas filled protein structures found in some microorganisms. They allow positioning of halobacteria at the optimal depth for growth in the poorly aerated shallow brine pools of their habitat. Its function is as follows. Expression of a 9.5 kb mc-vac DNA fragment containing 2 divergently transcribed regions (gvpD-gvpE-gvpF-gvpG-gvpH-gvpI-gvpJ-gvpK-gvpL-gvpM and gvpA-gvpC-gvpN-gvpO) allows H.volcanii to produce gas vesicles. This is Gas vesicle protein O from Haloferax mediterranei (strain ATCC 33500 / DSM 1411 / JCM 8866 / NBRC 14739 / NCIMB 2177 / R-4) (Halobacterium mediterranei).